A 174-amino-acid chain; its full sequence is Adipose-secreted signaling protein (174 aa).

N-acetylalanine is present on Ala2. A Phosphothreonine modification is found at Thr147.

Belongs to the ADISSP family.

Its subcellular location is the secreted. In terms of biological role, adipocyte-secreted protein (adipokine) that acts as a key regulator for white adipose tissue (WAT) thermogenesis and glucose homeostasis at least in part through activation of protein kinase A (PKA). The polypeptide is Adipose-secreted signaling protein (Rattus norvegicus (Rat)).